Here is a 118-residue protein sequence, read N- to C-terminus: Thioredoxin H-type 2 (118 aa).

The region spanning 2 to 113 (AEEGQVIGVH…LQQTIAKHIS (112 aa)) is the Thioredoxin domain. Residues Cys-39 and Cys-42 each act as nucleophile in the active site. Cysteines 39 and 42 form a disulfide.

Belongs to the thioredoxin family. Plant H-type subfamily.

The protein resides in the cytoplasm. Its function is as follows. Participates in various redox reactions through the reversible oxidation of the active center dithiol to a disulfide. The H form is known to activate a number of cytosolic enzymes. The polypeptide is Thioredoxin H-type 2 (Nicotiana tabacum (Common tobacco)).